Reading from the N-terminus, the 140-residue chain is Nucleoside diphosphate kinase (140 aa).

ATP contacts are provided by Lys-11, Phe-59, Arg-87, Thr-93, Arg-104, and Asn-114. Catalysis depends on His-117, which acts as the Pros-phosphohistidine intermediate.

This sequence belongs to the NDK family. As to quaternary structure, homotetramer. The cofactor is Mg(2+).

Its subcellular location is the cytoplasm. It carries out the reaction a 2'-deoxyribonucleoside 5'-diphosphate + ATP = a 2'-deoxyribonucleoside 5'-triphosphate + ADP. It catalyses the reaction a ribonucleoside 5'-diphosphate + ATP = a ribonucleoside 5'-triphosphate + ADP. Its function is as follows. Major role in the synthesis of nucleoside triphosphates other than ATP. The ATP gamma phosphate is transferred to the NDP beta phosphate via a ping-pong mechanism, using a phosphorylated active-site intermediate. In Francisella tularensis subsp. tularensis (strain SCHU S4 / Schu 4), this protein is Nucleoside diphosphate kinase.